Here is a 470-residue protein sequence, read N- to C-terminus: Asparagine--tRNA ligase (470 aa).

The protein belongs to the class-II aminoacyl-tRNA synthetase family. Homodimer.

Its subcellular location is the cytoplasm. It catalyses the reaction tRNA(Asn) + L-asparagine + ATP = L-asparaginyl-tRNA(Asn) + AMP + diphosphate + H(+). This chain is Asparagine--tRNA ligase, found in Blochmanniella floridana.